Reading from the N-terminus, the 63-residue chain is Putative alpha-neurotoxin RjAa9 (63 aa).

The 60-residue stretch at lysine 1–arginine 60 folds into the LCN-type CS-alpha/beta domain. 4 cysteine pairs are disulfide-bonded: cysteine 11/cysteine 59, cysteine 15/cysteine 35, cysteine 21/cysteine 42, and cysteine 25/cysteine 44.

This sequence belongs to the long (4 C-C) scorpion toxin superfamily. Sodium channel inhibitor family. Alpha subfamily. As to expression, expressed by the venom gland.

The protein localises to the secreted. Its function is as follows. Alpha toxins bind voltage-independently at site-3 of sodium channels (Nav) and inhibits the inactivation of the activated channels, thereby blocking neuronal transmission. This is Putative alpha-neurotoxin RjAa9 from Rhopalurus junceus (Caribbean blue scorpion).